Consider the following 283-residue polypeptide: Bifunctional protein FolD 2 (283 aa).

Residues 165-167, Thr192, and Val233 contribute to the NADP(+) site; that span reads GRG.

The protein belongs to the tetrahydrofolate dehydrogenase/cyclohydrolase family. In terms of assembly, homodimer.

The catalysed reaction is (6R)-5,10-methylene-5,6,7,8-tetrahydrofolate + NADP(+) = (6R)-5,10-methenyltetrahydrofolate + NADPH. It catalyses the reaction (6R)-5,10-methenyltetrahydrofolate + H2O = (6R)-10-formyltetrahydrofolate + H(+). It functions in the pathway one-carbon metabolism; tetrahydrofolate interconversion. Functionally, catalyzes the oxidation of 5,10-methylenetetrahydrofolate to 5,10-methenyltetrahydrofolate and then the hydrolysis of 5,10-methenyltetrahydrofolate to 10-formyltetrahydrofolate. This is Bifunctional protein FolD 2 from Saccharopolyspora erythraea (strain ATCC 11635 / DSM 40517 / JCM 4748 / NBRC 13426 / NCIMB 8594 / NRRL 2338).